Here is a 360-residue protein sequence, read N- to C-terminus: Phospho-N-acetylmuramoyl-pentapeptide-transferase (360 aa).

10 consecutive transmembrane segments (helical) span residues 21 to 41 (YITF…LWIG), 73 to 93 (TMGG…WADL), 98 to 118 (VWFV…DDYW), 132 to 152 (WKYF…YAVG), 168 to 188 (FMPQ…VGTS), 199 to 219 (GLAI…AWAT), 236 to 256 (AGEL…FLWY), 263 to 283 (VFMG…IAVL), 288 to 308 (LLLV…ILQV), and 338 to 358 (VIVC…VTLK).

It belongs to the glycosyltransferase 4 family. MraY subfamily. The cofactor is Mg(2+).

Its subcellular location is the cell inner membrane. It carries out the reaction UDP-N-acetyl-alpha-D-muramoyl-L-alanyl-gamma-D-glutamyl-meso-2,6-diaminopimeloyl-D-alanyl-D-alanine + di-trans,octa-cis-undecaprenyl phosphate = di-trans,octa-cis-undecaprenyl diphospho-N-acetyl-alpha-D-muramoyl-L-alanyl-D-glutamyl-meso-2,6-diaminopimeloyl-D-alanyl-D-alanine + UMP. It participates in cell wall biogenesis; peptidoglycan biosynthesis. Functionally, catalyzes the initial step of the lipid cycle reactions in the biosynthesis of the cell wall peptidoglycan: transfers peptidoglycan precursor phospho-MurNAc-pentapeptide from UDP-MurNAc-pentapeptide onto the lipid carrier undecaprenyl phosphate, yielding undecaprenyl-pyrophosphoryl-MurNAc-pentapeptide, known as lipid I. This is Phospho-N-acetylmuramoyl-pentapeptide-transferase from Actinobacillus pleuropneumoniae serotype 7 (strain AP76).